Consider the following 454-residue polypeptide: MCAARTPPLALVFRGTFVHSTWTCPMEVLRDHLLGVSDSGKIVFLEESSQQEKLAKEWCFKPCEIRELSHHEFFMPGLVDTHIHAPQYAFAGSNVDLPLLEWLNKYTFPTEQRFRSTDVAEEVYTRVVRRTLKNGTTTACYFGTIHTDSSLILAEITDKFGQRAFVGKVCMDLNDTVPEYKETTEESVKETERFVSEMLQKNYPRVKPIVTPRFTLSCTETLMSELGNIAKTHDLYIQSHISENREEIEAVKSLYPSYKNYTDVYDKNNLLTNKTVMAHGCYLSEEELNIFSERGASIAHCPNSNLSLSSGLLNVLEVLKHKVKIGLGTDVAGGYSYSMLDAIRRAVMVSNVLLINKVNEKNLTLKEVFRLATLGGSQALGLDSEIGNFEVGKEFDALLINPRASDSPIDLFYGDFVGDISEAVIQKFLYLGDDRNIEEVYVGGKQVVPFSSSV.

Zn(2+) is bound by residues H82 and H84. Substrate contacts are provided by residues H84 to Q87, R213 to F214, H240 to E243, and D330. Residues H240 and D330 each contribute to the Zn(2+) site. Position 453 is a phosphoserine (S453).

This sequence belongs to the metallo-dependent hydrolases superfamily. ATZ/TRZ family. As to quaternary structure, homodimer. Zn(2+) serves as cofactor.

The catalysed reaction is guanine + H2O + H(+) = xanthine + NH4(+). Its pathway is purine metabolism; guanine degradation; xanthine from guanine: step 1/1. Its function is as follows. Catalyzes the hydrolytic deamination of guanine, producing xanthine and ammonia. The sequence is that of Guanine deaminase from Mus musculus (Mouse).